Here is a 460-residue protein sequence, read N- to C-terminus: tRNA(Ile)-lysidine synthase (460 aa).

37–42 lines the ATP pocket; sequence SGGADS.

The protein belongs to the tRNA(Ile)-lysidine synthase family.

It is found in the cytoplasm. It catalyses the reaction cytidine(34) in tRNA(Ile2) + L-lysine + ATP = lysidine(34) in tRNA(Ile2) + AMP + diphosphate + H(+). Functionally, ligates lysine onto the cytidine present at position 34 of the AUA codon-specific tRNA(Ile) that contains the anticodon CAU, in an ATP-dependent manner. Cytidine is converted to lysidine, thus changing the amino acid specificity of the tRNA from methionine to isoleucine. The protein is tRNA(Ile)-lysidine synthase of Treponema denticola (strain ATCC 35405 / DSM 14222 / CIP 103919 / JCM 8153 / KCTC 15104).